A 384-amino-acid polypeptide reads, in one-letter code: Deoxyguanosinetriphosphate triphosphohydrolase-like protein (384 aa).

One can recognise an HD domain in the interval 62–198 (RLTHSLEVST…AALADDISYI (137 aa)).

This sequence belongs to the dGTPase family. Type 2 subfamily.

This chain is Deoxyguanosinetriphosphate triphosphohydrolase-like protein, found in Rickettsia conorii (strain ATCC VR-613 / Malish 7).